The sequence spans 432 residues: Metacaspase-1 (432 aa).

Low complexity-rich tracts occupy residues 1-14 and 29-59; these read MYPG…NNAG and QQYG…SQQY. The tract at residues 1–70 is disordered; the sequence is MYPGSGRYTY…PPPGPPPMAY (70 aa). Over residues 60-70 the composition is skewed to pro residues; sequence APPPGPPPMAY. Active-site residues include H220 and C276.

Belongs to the peptidase C14B family.

It localises to the cytoplasm. Its subcellular location is the nucleus. Functionally, mediates cell death (apoptosis) triggered by oxygen stress, salt stress or chronological aging. Regulated cell death can prevent a release of toxic cellular components, thus avoiding necrotic collapse of the colony, and can also provide nutrients for healthy cells. Therefore, regulated cell death in yeast colonies can be as important for their development as are apoptosis and related processes that occur within metazoa. The sequence is that of Metacaspase-1 (MCA1) from Saccharomyces cerevisiae (strain YJM789) (Baker's yeast).